A 223-amino-acid chain; its full sequence is Agamous-like MADS-box protein AGL11 (223 aa).

In terms of domain architecture, MADS-box spans 1 to 61 (MGRGKIEIKR…GRVYEYSNNN (61 aa)). In terms of domain architecture, K-box spans 87–177 (AQYYQQESAK…RTKIAEVERL (91 aa)).

As to expression, expressed in flowers and seeds. Expressed in endotesta cell layer of developing seeds.

The protein resides in the nucleus. Probable transcription factor involved in seed development. Plays a role in seed morphogenesis by promoting the correct development of endotesta cell layer, which directs the further development of the seed coat, the endosperm, and consequently the embryo. The polypeptide is Agamous-like MADS-box protein AGL11 (Vitis vinifera (Grape)).